We begin with the raw amino-acid sequence, 202 residues long: Tetratricopeptide repeat protein 36 (202 aa).

TPR repeat units lie at residues 49–82 (AQDL…LPER), 83–116 (ASAY…SGIA), and 121–154 (RQAL…GSDF).

It belongs to the TTC36 family.

In Xenopus tropicalis (Western clawed frog), this protein is Tetratricopeptide repeat protein 36 (ttc36).